Here is a 628-residue protein sequence, read N- to C-terminus: tRNA uridine 5-carboxymethylaminomethyl modification enzyme MnmG (628 aa).

Glycine 14–glycine 19 provides a ligand contact to FAD. Position 273-287 (glycine 273–phenylalanine 287) interacts with NAD(+).

It belongs to the MnmG family. In terms of assembly, homodimer. Heterotetramer of two MnmE and two MnmG subunits. FAD is required as a cofactor.

It is found in the cytoplasm. In terms of biological role, NAD-binding protein involved in the addition of a carboxymethylaminomethyl (cmnm) group at the wobble position (U34) of certain tRNAs, forming tRNA-cmnm(5)s(2)U34. The polypeptide is tRNA uridine 5-carboxymethylaminomethyl modification enzyme MnmG (Bacillus velezensis (strain DSM 23117 / BGSC 10A6 / LMG 26770 / FZB42) (Bacillus amyloliquefaciens subsp. plantarum)).